Here is a 152-residue protein sequence, read N- to C-terminus: Small ribosomal subunit protein uS13 (152 aa).

Residues 133–152 (GQHTKTTGRRGRTVGVSKKK) are disordered.

This sequence belongs to the universal ribosomal protein uS13 family.

The protein localises to the cytoplasm. Located at the top of the head of the 40S subunit, it contacts several helices of the 18S rRNA. In Spodoptera frugiperda (Fall armyworm), this protein is Small ribosomal subunit protein uS13 (RpS18).